Reading from the N-terminus, the 963-residue chain is Aminopeptidase N (963 aa).

Over 2–8 (AKGFYIS) the chain is Cytoplasmic. Residues 9–32 (KALGILGILLGVAAVATIIALSVV) traverse the membrane as a helical; Signal-anchor for type II membrane protein segment. Residues 33-64 (YAQEKNKNAEHVPQAPTSPTITTTAAITLDQS) are cytosolic Ser/Thr-rich junction. Over 33-963 (YAQEKNKNAE…VVLNWFIEHS (931 aa)) the chain is Extracellular. Residues 65–963 (KPWNRYRLPT…VVLNWFIEHS (899 aa)) form a metalloprotease region. Asparagine 82 and asparagine 124 each carry an N-linked (GlcNAc...) asparagine glycan. Position 171 is a sulfotyrosine (tyrosine 171). 6 N-linked (GlcNAc...) asparagine glycosylation sites follow: asparagine 229, asparagine 237, asparagine 258, asparagine 286, asparagine 314, and asparagine 328. Residue 347-351 (GAMEN) coordinates substrate. Histidine 383 provides a ligand contact to Zn(2+). Glutamate 384 serves as the catalytic Proton acceptor. 2 residues coordinate Zn(2+): histidine 387 and glutamate 406. Residues asparagine 506, asparagine 556, asparagine 569, asparagine 622, asparagine 646, and asparagine 736 are each glycosylated (N-linked (GlcNAc...) asparagine). Residues 717–813 (KYLRKQVEPL…DQWDFAWGQL (97 aa)) form an interaction with TGEV spike glycoprotein region. 2 disulfide bridges follow: cysteine 758/cysteine 765 and cysteine 795/cysteine 831.

This sequence belongs to the peptidase M1 family. As to quaternary structure, homodimer. Interacts with SLC6A19. (Microbial infection) Interacts with TGEV and PRCoV spike glycoprotein. The cofactor is Zn(2+). Sulfated. In terms of processing, N- and O-glycosylated. Post-translationally, may undergo proteolysis and give rise to a soluble form.

The protein localises to the cell membrane. It catalyses the reaction Release of an N-terminal amino acid, Xaa-|-Yaa- from a peptide, amide or arylamide. Xaa is preferably Ala, but may be most amino acids including Pro (slow action). When a terminal hydrophobic residue is followed by a prolyl residue, the two may be released as an intact Xaa-Pro dipeptide.. In terms of biological role, broad specificity aminopeptidase which plays a role in the final digestion of peptides generated from hydrolysis of proteins by gastric and pancreatic proteases. Also involved in the processing of various peptides including peptide hormones, such as angiotensin III and IV, neuropeptides, and chemokines. May also be involved the cleavage of peptides bound to major histocompatibility complex class II molecules of antigen presenting cells. May have a role in angiogenesis and promote cholesterol crystallization. It is able to degrade Leu-enkephalin and Met-enkephalin but not cholecystokinin CCK8, neuromedin C (GRP-10), somatostatin-14, substance P and vasoactive intestinal peptide. May have a role in amino acid transport by acting as binding partner of amino acid transporter SLC6A19 and regulating its activity. Functionally, (Microbial infection) In case of porcine transmissible gastroenteritis coronavirus (TGEV) and porcine respiratory coronavirus (PRCoV) infections, serves as a receptor for TGEV and PRCoV spike glycoprotein in a species-specific manner. This Sus scrofa (Pig) protein is Aminopeptidase N (ANPEP).